A 289-amino-acid polypeptide reads, in one-letter code: Energy-coupling factor transporter ATP-binding protein EcfA2 (289 aa).

The region spanning 3–246 (IRFKQVDFTY…TQWLKEKQLG (244 aa)) is the ABC transporter domain. 40–47 (GHTGSGKS) is a binding site for ATP.

It belongs to the ABC transporter superfamily. Energy-coupling factor EcfA family. Forms a stable energy-coupling factor (ECF) transporter complex composed of 2 membrane-embedded substrate-binding proteins (S component), 2 ATP-binding proteins (A component) and 2 transmembrane proteins (T component).

The protein resides in the cell membrane. In terms of biological role, ATP-binding (A) component of a common energy-coupling factor (ECF) ABC-transporter complex. Unlike classic ABC transporters this ECF transporter provides the energy necessary to transport a number of different substrates. This chain is Energy-coupling factor transporter ATP-binding protein EcfA2, found in Enterococcus faecalis (strain ATCC 700802 / V583).